Consider the following 601-residue polypeptide: Invasin CotH3 (601 aa).

The signal sequence occupies residues 1-17 (MKLSIISAAFLVAITHA). Residues Asn-28, Asn-85, Asn-170, Asn-324, Asn-449, Asn-527, Asn-541, Asn-554, Asn-561, and Asn-571 are each glycosylated (N-linked (GlcNAc...) asparagine). The span at 539–579 (SANGTTAAAPAPAAGNSTGKGGNQSISSSASSNKTSAQSTS) shows a compositional bias: low complexity. A disordered region spans residues 539–581 (SANGTTAAAPAPAAGNSTGKGGNQSISSSASSNKTSAQSTSGA). A lipid anchor (GPI-anchor amidated serine) is attached at Ser-579. The propeptide at 580-601 (GASRSKTAPIVLAISALALLVF) is removed in mature form.

Interacts with HSPA5/BiP on the cell surface of host nasal epithelial cells.

The protein localises to the cell membrane. Functionally, promotes invasion of host epithelial cells by adhering to receptors on the host cell surface to facilitate endocytosis of the pathogen into host cells. Binds HSPA5/BiP protein on the cell surface of host nasal epithelial cells. The sequence is that of Invasin CotH3 from Rhizopus delemar (strain RA 99-880 / ATCC MYA-4621 / FGSC 9543 / NRRL 43880) (Mucormycosis agent).